The primary structure comprises 208 residues: FMN-dependent NADH:quinone oxidoreductase (208 aa).

FMN is bound by residues 17-19, 99-102, and 143-146; these read SNS, MWNL, and SRGG.

The protein belongs to the azoreductase type 1 family. As to quaternary structure, homodimer. It depends on FMN as a cofactor.

The enzyme catalyses 2 a quinone + NADH + H(+) = 2 a 1,4-benzosemiquinone + NAD(+). It catalyses the reaction N,N-dimethyl-1,4-phenylenediamine + anthranilate + 2 NAD(+) = 2-(4-dimethylaminophenyl)diazenylbenzoate + 2 NADH + 2 H(+). In terms of biological role, quinone reductase that provides resistance to thiol-specific stress caused by electrophilic quinones. Functionally, also exhibits azoreductase activity. Catalyzes the reductive cleavage of the azo bond in aromatic azo compounds to the corresponding amines. The protein is FMN-dependent NADH:quinone oxidoreductase of Staphylococcus aureus (strain Mu50 / ATCC 700699).